Here is a 208-residue protein sequence, read N- to C-terminus: MRKQAGGPCEKLNFPLVELEPYARVNRETTKLNKAHVRRDYSGRSICQPDTNNPTRWKYERPLETIRAWQDVAEGKVPASNEKAARVSNLKTVPSLKRENKEVNANSKPPVKQQEVIESTVISKSQSPSVKQLKLTESTLLAPSSSLKPSVSLKKDISSNLLCAAASNGYFRRPAAMRAQTLVPITQPDSKKNELKQKFKHLVHHVLT.

Residues 77 to 114 form a disordered region; sequence VPASNEKAARVSNLKTVPSLKRENKEVNANSKPPVKQQ.

Functionally, has a role in meiosis. This chain is Meiotically up-regulated gene 9 protein (mug9), found in Schizosaccharomyces pombe (strain 972 / ATCC 24843) (Fission yeast).